A 133-amino-acid polypeptide reads, in one-letter code: MARVTVEDCVDKVENRFELVLLAGHRARQISQGAPITVDRDNDKNPVVALREIADETLSPDDLKEDLIHSLQKHVEVDEPEAAPAQIANAAEEIAEGIAEAGEEDVVTFDRMSEEELLAGIEGLVAPEKNDGF.

It belongs to the RNA polymerase subunit omega family. In terms of assembly, the RNAP catalytic core consists of 2 alpha, 1 beta, 1 beta' and 1 omega subunit. When a sigma factor is associated with the core the holoenzyme is formed, which can initiate transcription.

It catalyses the reaction RNA(n) + a ribonucleoside 5'-triphosphate = RNA(n+1) + diphosphate. In terms of biological role, promotes RNA polymerase assembly. Latches the N- and C-terminal regions of the beta' subunit thereby facilitating its interaction with the beta and alpha subunits. This chain is DNA-directed RNA polymerase subunit omega, found in Brucella abortus (strain S19).